The chain runs to 336 residues: COP9 signalosome complex subunit 5 (336 aa).

The 138-residue stretch at 44-181 (VRISSVAMIK…IGAFRTIPEG (138 aa)) folds into the MPN domain. The Zn(2+) site is built by histidine 127, histidine 129, and aspartate 140. A JAMM motif motif is present at residues 127–140 (HSHPGYGCWLSGID).

This sequence belongs to the peptidase M67A family. CSN5 subfamily. Component of the COP9 signalosome (CSN) complex.

The protein resides in the cytoplasm. It is found in the nucleus. Its function is as follows. Catalytic component of the COP9 signalosome (CSN) complex that acts as an regulator of the ubiquitin (Ubl) conjugation pathway by mediating the deneddylation of the cullin subunit of SCF-type E3 ubiquitin-protein ligase complexes. The CSN complex is involved in the regulation of the circadian clock through its control of the stability of the SCF(FWD-1) complex. This Neurospora crassa (strain ATCC 24698 / 74-OR23-1A / CBS 708.71 / DSM 1257 / FGSC 987) protein is COP9 signalosome complex subunit 5 (csn-5).